The chain runs to 305 residues: Spore coat protein CotA (305 aa).

It localises to the spore coat. Its subcellular location is the spore. It is found in the perispore. Its function is as follows. Contributes to maintain proper thickness of the spore coat. May contribute to the formation of polar appendages. May play an important role in assembly of the outer layers of the spore coat. This Clostridioides difficile (strain 630) (Peptoclostridium difficile) protein is Spore coat protein CotA.